A 60-amino-acid chain; its full sequence is UPF0434 protein Vapar_2640 (60 aa).

It belongs to the UPF0434 family.

In Variovorax paradoxus (strain S110), this protein is UPF0434 protein Vapar_2640.